Here is a 506-residue protein sequence, read N- to C-terminus: Probable cytosol aminopeptidase (506 aa).

Mn(2+) is bound by residues Lys-270 and Asp-275. Residue Lys-282 is part of the active site. The Mn(2+) site is built by Asp-293, Asp-352, and Glu-354. Residue Arg-356 is part of the active site.

The protein belongs to the peptidase M17 family. Mn(2+) is required as a cofactor.

It is found in the cytoplasm. It carries out the reaction Release of an N-terminal amino acid, Xaa-|-Yaa-, in which Xaa is preferably Leu, but may be other amino acids including Pro although not Arg or Lys, and Yaa may be Pro. Amino acid amides and methyl esters are also readily hydrolyzed, but rates on arylamides are exceedingly low.. The catalysed reaction is Release of an N-terminal amino acid, preferentially leucine, but not glutamic or aspartic acids.. Functionally, presumably involved in the processing and regular turnover of intracellular proteins. Catalyzes the removal of unsubstituted N-terminal amino acids from various peptides. This is Probable cytosol aminopeptidase from Photorhabdus laumondii subsp. laumondii (strain DSM 15139 / CIP 105565 / TT01) (Photorhabdus luminescens subsp. laumondii).